A 148-amino-acid chain; its full sequence is Lysozyme C-3 (148 aa).

Residues 1-18 (MKTLLVLALLLLSVSVQA) form the signal peptide. A C-type lysozyme domain is found at 19 to 148 (KVYDRCEFAR…VSQYIRGCKL (130 aa)). Intrachain disulfides connect Cys-24–Cys-146, Cys-48–Cys-134, Cys-83–Cys-99, and Cys-95–Cys-113. Residues Glu-53 and Asp-71 contribute to the active site.

It belongs to the glycosyl hydrolase 22 family. In terms of assembly, monomer.

The protein localises to the secreted. It carries out the reaction Hydrolysis of (1-&gt;4)-beta-linkages between N-acetylmuramic acid and N-acetyl-D-glucosamine residues in a peptidoglycan and between N-acetyl-D-glucosamine residues in chitodextrins.. Lysozymes have primarily a bacteriolytic function; those in tissues and body fluids are associated with the monocyte-macrophage system and enhance the activity of immunoagents. The protein is Lysozyme C-3 of Sus scrofa (Pig).